A 185-amino-acid polypeptide reads, in one-letter code: Prorelaxin 1 (185 aa).

Residues 1-22 (MSSRFLLQLLGFWLLLSQPCRT) form the signal peptide. 3 cysteine pairs are disulfide-bonded: cysteine 36–cysteine 171, cysteine 48–cysteine 185, and cysteine 170–cysteine 175. Residues 58–156 (SQEEPALLAR…LKYLQSDTHS (99 aa)) constitute a propeptide, connecting peptide. The interval 135–161 (RLGEAEDGSPPGLKYLQSDTHSRKKRE) is disordered.

The protein belongs to the insulin family. As to quaternary structure, heterodimer of a B chain and an A chain linked by two disulfide bonds.

It localises to the secreted. Functionally, relaxin is an ovarian hormone that acts with estrogen to produce dilatation of the birth canal in many mammals. This chain is Prorelaxin 1 (Rln1), found in Mus musculus (Mouse).